The sequence spans 247 residues: 23S rRNA (guanosine-2'-O-)-methyltransferase RlmB (247 aa).

The S-adenosyl-L-methionine site is built by glycine 197, isoleucine 217, and leucine 226.

This sequence belongs to the class IV-like SAM-binding methyltransferase superfamily. RNA methyltransferase TrmH family. RlmB subfamily.

It is found in the cytoplasm. It carries out the reaction guanosine(2251) in 23S rRNA + S-adenosyl-L-methionine = 2'-O-methylguanosine(2251) in 23S rRNA + S-adenosyl-L-homocysteine + H(+). Its function is as follows. Specifically methylates the ribose of guanosine 2251 in 23S rRNA. The sequence is that of 23S rRNA (guanosine-2'-O-)-methyltransferase RlmB from Vibrio vulnificus (strain CMCP6).